The primary structure comprises 55 residues: uncharacterized protein (55 aa).

This is an uncharacterized protein from Bacillus subtilis (strain 168).